The sequence spans 422 residues: Protein TEX1 (422 aa).

5 WD repeats span residues 61–100, 158–197, 207–246, 251–290, and 293–332; these read ITPN…FDKS, GSKT…SSVC, EDND…LEVC, AHTG…CELI, and DLNS…LLHS. Positions 388 to 422 are disordered; sequence KRRKNNGGGNNHNKRTSKNTDRIGKDRPSRFNSKK. Residues 405-416 show a composition bias toward basic and acidic residues; sequence KNTDRIGKDRPS.

Belongs to the THOC3 family. In terms of assembly, component of the transcription/export (TREX) complex and the THO complex.

It is found in the nucleus. Component of the TREX complex, which operates in coupling transcription elongation to mRNA export. This chain is Protein TEX1 (TEX1), found in Saccharomyces cerevisiae (strain ATCC 204508 / S288c) (Baker's yeast).